The sequence spans 212 residues: Thiamine-phosphate synthase (212 aa).

4-amino-2-methyl-5-(diphosphooxymethyl)pyrimidine-binding positions include 33–37 (QMRFK) and Asn65. The Mg(2+) site is built by Asp66 and Asp85. Thr104 is a binding site for 4-amino-2-methyl-5-(diphosphooxymethyl)pyrimidine. 130–132 (TNT) lines the 2-[(2R,5Z)-2-carboxy-4-methylthiazol-5(2H)-ylidene]ethyl phosphate pocket. Residue Lys133 participates in 4-amino-2-methyl-5-(diphosphooxymethyl)pyrimidine binding. Gly166 contacts 2-[(2R,5Z)-2-carboxy-4-methylthiazol-5(2H)-ylidene]ethyl phosphate.

This sequence belongs to the thiamine-phosphate synthase family. The cofactor is Mg(2+).

The enzyme catalyses 2-[(2R,5Z)-2-carboxy-4-methylthiazol-5(2H)-ylidene]ethyl phosphate + 4-amino-2-methyl-5-(diphosphooxymethyl)pyrimidine + 2 H(+) = thiamine phosphate + CO2 + diphosphate. It carries out the reaction 2-(2-carboxy-4-methylthiazol-5-yl)ethyl phosphate + 4-amino-2-methyl-5-(diphosphooxymethyl)pyrimidine + 2 H(+) = thiamine phosphate + CO2 + diphosphate. The catalysed reaction is 4-methyl-5-(2-phosphooxyethyl)-thiazole + 4-amino-2-methyl-5-(diphosphooxymethyl)pyrimidine + H(+) = thiamine phosphate + diphosphate. It participates in cofactor biosynthesis; thiamine diphosphate biosynthesis; thiamine phosphate from 4-amino-2-methyl-5-diphosphomethylpyrimidine and 4-methyl-5-(2-phosphoethyl)-thiazole: step 1/1. Functionally, condenses 4-methyl-5-(beta-hydroxyethyl)thiazole monophosphate (THZ-P) and 2-methyl-4-amino-5-hydroxymethyl pyrimidine pyrophosphate (HMP-PP) to form thiamine monophosphate (TMP). The chain is Thiamine-phosphate synthase from Flavobacterium johnsoniae (strain ATCC 17061 / DSM 2064 / JCM 8514 / BCRC 14874 / CCUG 350202 / NBRC 14942 / NCIMB 11054 / UW101) (Cytophaga johnsonae).